We begin with the raw amino-acid sequence, 760 residues long: MRYNQFSYIPTSLERAAEELKELGFDLDLQKTAKANLESFLRKLFFHYPDSDYPLSHLIAKNDMDALSFFQSEQELSKEVFDLLALQVLGFIPGVDFTEADAFLDKLAFPIHFDETEIIKHIHHLLATRCKSGMTLIDDLVSQGMLTMDNDYHFFNGKSLATFDTSQLIREVVYVEAPLDTDQDGQLDLIKVNIIRPQSQKPLPTLMTPSPYHQGINEVANDKKLYRMEKELVVKKRRQITVEDRDFIPLETQPCKLPIGQNLESFSYINSYSLNDYFLARGFANIYVSGVGTAGSTGFMTSGDYAQIESFKAVIDWLNGRATAYTSHSKNHQVRADWANGLVCTTGKSYLGTMSTGLATTGVDGLAMIIAESAISSWYNYYRENGLVCSPGGYPGEDLDVLTELTYSRNLLAGDYLRHNDRYQELLNQQSQALDRQSGDYNQFWHDRNYLKNAHQIKCDVVYTHGLQDWNVKPRQVYEIFNALPSTINKHLFLHQGEHVYMHNWQSIDFRESMNALLCQKLLGLANDFSLPEMIWQDNTCPQNWQERKVFGTSTIKELDLGQELLLIDNHYGEDEFKAYGKDFRAFKAALFEGKANQALVDILLEEDLPINGEIVLQLKVKSSENKGLLSAQILDYGKKKRLGDLPIALTQSSIDNGQNFSREPLKELPFREDSYRVISKGFMNLQNRNNLSSIETIPNNKWMTVRLPLQPTIYHLEKGDTLRVILYTTDFEHTVRDNSNYALTIDLSQSQLIVPIASN.

Catalysis depends on charge relay system residues S349, D469, and H499.

It belongs to the peptidase S15 family. As to quaternary structure, homodimer.

It localises to the cytoplasm. It catalyses the reaction Hydrolyzes Xaa-Pro-|- bonds to release unblocked, N-terminal dipeptides from substrates including Ala-Pro-|-p-nitroanilide and (sequentially) Tyr-Pro-|-Phe-Pro-|-Gly-Pro-|-Ile.. Removes N-terminal dipeptides sequentially from polypeptides having unsubstituted N-termini provided that the penultimate residue is proline. In Streptococcus pyogenes serotype M2 (strain MGAS10270), this protein is Xaa-Pro dipeptidyl-peptidase.